A 58-amino-acid chain; its full sequence is Ribulose bisphosphate carboxylase large chain (58 aa).

A propeptide spanning residues 1-2 (MS) is cleaved from the precursor. The residue at position 3 (Pro3) is an N-acetylproline. An N6,N6,N6-trimethyllysine modification is found at Lys14.

It belongs to the RuBisCO large chain family. Type I subfamily. In terms of assembly, heterohexadecamer of 8 large chains and 8 small chains.

It localises to the plastid. The protein localises to the chloroplast. The catalysed reaction is 2 (2R)-3-phosphoglycerate + 2 H(+) = D-ribulose 1,5-bisphosphate + CO2 + H2O. The enzyme catalyses D-ribulose 1,5-bisphosphate + O2 = 2-phosphoglycolate + (2R)-3-phosphoglycerate + 2 H(+). RuBisCO catalyzes two reactions: the carboxylation of D-ribulose 1,5-bisphosphate, the primary event in carbon dioxide fixation, as well as the oxidative fragmentation of the pentose substrate in the photorespiration process. Both reactions occur simultaneously and in competition at the same active site. This Weinmannia silvicola (Towai) protein is Ribulose bisphosphate carboxylase large chain (rbcL).